Reading from the N-terminus, the 261-residue chain is Imidazole glycerol phosphate synthase subunit HisF (261 aa).

Residues Asp16 and Asp135 contribute to the active site.

Belongs to the HisA/HisF family. As to quaternary structure, heterodimer of HisH and HisF.

It localises to the cytoplasm. The catalysed reaction is 5-[(5-phospho-1-deoxy-D-ribulos-1-ylimino)methylamino]-1-(5-phospho-beta-D-ribosyl)imidazole-4-carboxamide + L-glutamine = D-erythro-1-(imidazol-4-yl)glycerol 3-phosphate + 5-amino-1-(5-phospho-beta-D-ribosyl)imidazole-4-carboxamide + L-glutamate + H(+). It participates in amino-acid biosynthesis; L-histidine biosynthesis; L-histidine from 5-phospho-alpha-D-ribose 1-diphosphate: step 5/9. Functionally, IGPS catalyzes the conversion of PRFAR and glutamine to IGP, AICAR and glutamate. The HisF subunit catalyzes the cyclization activity that produces IGP and AICAR from PRFAR using the ammonia provided by the HisH subunit. This Mycobacterium marinum (strain ATCC BAA-535 / M) protein is Imidazole glycerol phosphate synthase subunit HisF.